We begin with the raw amino-acid sequence, 727 residues long: Glycerol-3-phosphate dehydrogenase, mitochondrial (727 aa).

Residues 1–42 (MAFQKAVKGTILVGGGALATVLGLSQFAHYRRKQMNLAYVKA) constitute a mitochondrion transit peptide. FAD is bound at residue 71–99 (DILVIGGGATGSGCALDAVTRGLKTALVE). The residue at position 601 (Tyr-601) is a Phosphotyrosine. 2 consecutive EF-hand domains span residues 623-658 (SDID…INVQ) and 659-694 (MDEN…IQKG). 5 residues coordinate Ca(2+): Asp-672, Asn-674, Asn-676, Gln-678, and Glu-683.

This sequence belongs to the FAD-dependent glycerol-3-phosphate dehydrogenase family. FAD is required as a cofactor.

The protein resides in the mitochondrion. The catalysed reaction is a quinone + sn-glycerol 3-phosphate = dihydroxyacetone phosphate + a quinol. It functions in the pathway polyol metabolism; glycerol degradation via glycerol kinase pathway; glycerone phosphate from sn-glycerol 3-phosphate (anaerobic route): step 1/1. Its activity is regulated as follows. Calcium-binding enhance the activity of the enzyme. Its function is as follows. Calcium-responsive mitochondrial glycerol-3-phosphate dehydrogenase which seems to be a key component of the pancreatic beta-cell glucose-sensing device. This Homo sapiens (Human) protein is Glycerol-3-phosphate dehydrogenase, mitochondrial.